Reading from the N-terminus, the 366-residue chain is Agamous-like MADS-box protein AGL36 (366 aa).

One can recognise an MADS-box domain in the interval 1-59 (MKKVKLSLIANERSRKTSFIKRKDGIFKKLHELSTLCGVQACALIYSPFIPVPESWPSR). A coiled-coil region spans residues 86-115 (TYLMERITKAKEQLKNLAAENRELQVRRFM).

As to quaternary structure, interacts with AGL62.

The protein localises to the nucleus. Its function is as follows. Probable transcription factor. This chain is Agamous-like MADS-box protein AGL36 (AGL36), found in Arabidopsis thaliana (Mouse-ear cress).